A 175-amino-acid chain; its full sequence is E1B protein, small T-antigen (175 aa).

The segment at 153–175 (LAEEDEDEEGTTLTTEAEQESSA) is disordered.

This sequence belongs to the adenoviridae E1B 19 kDa protein family.

This chain is E1B protein, small T-antigen, found in Mus musculus (Mouse).